The chain runs to 374 residues: GDSL esterase/lipase At3g50400 (374 aa).

Positions 1–26 (MKKSIFFVPVLVLFFFGSRFSRVASA) are cleaved as a signal peptide. Ser41 functions as the Nucleophile in the catalytic mechanism. Asn104 and Asn125 each carry an N-linked (GlcNAc...) asparagine glycan. Residues Asp339 and His342 contribute to the active site.

Belongs to the 'GDSL' lipolytic enzyme family.

It is found in the secreted. This Arabidopsis thaliana (Mouse-ear cress) protein is GDSL esterase/lipase At3g50400.